We begin with the raw amino-acid sequence, 487 residues long: Malonate-semialdehyde dehydrogenase (487 aa).

Residues Ala150, Phe152, Lys176, Glu179, Arg180, Ser229, and Thr251 each contribute to the NAD(+) site. Cys284 functions as the Nucleophile in the catalytic mechanism. Glu382 contributes to the NAD(+) binding site.

The protein belongs to the aldehyde dehydrogenase family. IolA subfamily. As to quaternary structure, homotetramer.

The catalysed reaction is 3-oxopropanoate + NAD(+) + CoA + H2O = hydrogencarbonate + acetyl-CoA + NADH + H(+). The enzyme catalyses 2-methyl-3-oxopropanoate + NAD(+) + CoA + H2O = propanoyl-CoA + hydrogencarbonate + NADH + H(+). It participates in polyol metabolism; myo-inositol degradation into acetyl-CoA; acetyl-CoA from myo-inositol: step 7/7. Its function is as follows. Catalyzes the oxidation of malonate semialdehyde (MSA) and methylmalonate semialdehyde (MMSA) into acetyl-CoA and propanoyl-CoA, respectively. Is involved in a myo-inositol catabolic pathway. Bicarbonate, and not CO2, is the end-product of the enzymatic reaction. The sequence is that of Malonate-semialdehyde dehydrogenase from Bacillus velezensis (strain DSM 23117 / BGSC 10A6 / LMG 26770 / FZB42) (Bacillus amyloliquefaciens subsp. plantarum).